The chain runs to 340 residues: Protein-arginine kinase (340 aa).

One can recognise a Phosphagen kinase C-terminal domain in the interval Val21–Ala242. ATP contacts are provided by residues Ser24 to Arg28, His79, Arg113, Arg164 to Met168, and Arg195 to Glu200.

Belongs to the ATP:guanido phosphotransferase family.

The enzyme catalyses L-arginyl-[protein] + ATP = N(omega)-phospho-L-arginyl-[protein] + ADP + H(+). Catalyzes the specific phosphorylation of arginine residues in proteins. The sequence is that of Protein-arginine kinase from Listeria monocytogenes serotype 4b (strain CLIP80459).